Here is a 247-residue protein sequence, read N- to C-terminus: 14-3-3 protein gamma-1 (247 aa).

This sequence belongs to the 14-3-3 family. In terms of assembly, homodimer, and heterodimer with other family members.

Its subcellular location is the cytoplasm. Its function is as follows. Adapter protein implicated in the regulation of a large spectrum of both general and specialized signaling pathways. Binds to a large number of partners, usually by recognition of a phosphoserine or phosphothreonine motif. Binding generally results in the modulation of the activity of the binding partner. The polypeptide is 14-3-3 protein gamma-1 (ywhag1) (Danio rerio (Zebrafish)).